A 622-amino-acid chain; its full sequence is Low affinity potassium transport system protein Kup (622 aa).

12 helical membrane-spanning segments follow: residues 12-32 (ITLAAIGVVYGDIGTSPLYTL), 49-69 (VFGFLSLIFWLLILVVSLKYL), 101-121 (FLVIIGLIGGSFFYGEVVITP), 134-154 (IIAPQLDTWVVPLAIIVLTLL), 163-183 (GLVGKLFAPIMLAWFLILAAL), 213-233 (VSFVALGAVVLSITGVEALYA), 247-267 (WFTVVLPSLVLNYFGQGALLL), 276-296 (PFFLLAPDWALVPMLIIATLA), 337-357 (IYIPFINWLLYVAVVIVIVSF), 363-383 (LAAAYGIAVTGTMVLTSILST), 395-415 (FLVALILVGLLCIDLPLFSAN), and 419-439 (IVSGGWLPLTLGLVMFIVMTT).

It belongs to the HAK/KUP transporter (TC 2.A.72) family.

Its subcellular location is the cell inner membrane. It catalyses the reaction K(+)(in) + H(+)(in) = K(+)(out) + H(+)(out). Its function is as follows. Responsible for the low-affinity transport of potassium into the cell. Likely operates as a K(+):H(+) symporter. This chain is Low affinity potassium transport system protein Kup, found in Enterobacter sp. (strain 638).